The primary structure comprises 361 residues: UDP-3-O-acylglucosamine N-acyltransferase (361 aa).

His253 serves as the catalytic Proton acceptor.

The protein belongs to the transferase hexapeptide repeat family. LpxD subfamily. In terms of assembly, homotrimer.

It carries out the reaction a UDP-3-O-[(3R)-3-hydroxyacyl]-alpha-D-glucosamine + a (3R)-hydroxyacyl-[ACP] = a UDP-2-N,3-O-bis[(3R)-3-hydroxyacyl]-alpha-D-glucosamine + holo-[ACP] + H(+). It functions in the pathway bacterial outer membrane biogenesis; LPS lipid A biosynthesis. Its function is as follows. Catalyzes the N-acylation of UDP-3-O-acylglucosamine using 3-hydroxyacyl-ACP as the acyl donor. Is involved in the biosynthesis of lipid A, a phosphorylated glycolipid that anchors the lipopolysaccharide to the outer membrane of the cell. This chain is UDP-3-O-acylglucosamine N-acyltransferase, found in Burkholderia mallei (strain ATCC 23344).